The sequence spans 407 residues: Schlafen-like protein 1 (407 aa).

Disordered regions lie at residues 1 to 28 (MTPM…LPEL) and 137 to 191 (AQGP…CQGR). Over residues 155 to 167 (GLSPGPSPGSGVP) the composition is skewed to low complexity. Over residues 181 to 190 (QAQQLQSCQG) the composition is skewed to polar residues. Position 261-268 (261-268 (GVEDSGLV)) interacts with ATP. Positions 366 to 398 (RQRWLVELGKLEEKMKALMMEKEQLQQQLQQHG) form a coiled coil.

This sequence belongs to the Schlafen family. Subgroup I subfamily.

The chain is Schlafen-like protein 1 (SLFNL1) from Homo sapiens (Human).